Reading from the N-terminus, the 247-residue chain is Probable transcriptional regulatory protein MS0710 (247 aa).

It belongs to the TACO1 family.

It is found in the cytoplasm. The sequence is that of Probable transcriptional regulatory protein MS0710 from Mannheimia succiniciproducens (strain KCTC 0769BP / MBEL55E).